Reading from the N-terminus, the 1034-residue chain is Enteropeptidase (1034 aa).

Residues 1–51 (MGSKRIIPSRHRSLSTYEVMFTALFAILMVLCAGLIAVSWLTIKGSEKDAA) constitute a propeptide that is removed on maturation. The Cytoplasmic segment spans residues 2–18 (GSKRIIPSRHRSLSTYE). The chain crosses the membrane as a helical; Signal-anchor for type II membrane protein span at residues 19–47 (VMFTALFAILMVLCAGLIAVSWLTIKGSE). Topologically, residues 48 to 1034 (KDAALGKSHE…FTEWIQSFLH (987 aa)) are extracellular. Residues 54 to 169 (KSHEARGTMK…NSIDITESLE (116 aa)) form the SEA domain. Residues N116, N147, N170, and N194 are each glycosylated (N-linked (GlcNAc...) asparagine). Residues 197–238 (IECLPGSRPCADALKCIAVDLFCDGELNCPDGSDEDSKICAT) form the LDL-receptor class A 1 domain. 4 disulfide bridges follow: C199–C212, C206–C225, C219–C236, and C240–C268. A CUB 1 domain is found at 240 to 349 (CDGKFLLTES…IGFNATYTAF (110 aa)). N-linked (GlcNAc...) asparagine glycans are attached at residues N283, N343, N350, N403, N455, N485, N518, N549, and N645. Residues 357 to 519 (DEKINCNFED…ISLTYGICNV (163 aa)) form the MAM domain. The cysteines at positions 539 and 567 are disulfide-linked. The 111-residue stretch at 539–649 (CGGPFELWEP…GGFKANFTTG (111 aa)) folds into the CUB 2 domain. Positions 656–694 (EPCKEDNFQCENGECVLLVNLCDGFSHCKDGSDEAHCVR) constitute an LDL-receptor class A 2 domain. 3 disulfide bridges follow: C658–C670, C665–C683, and C677–C692. Residues 693 to 786 (VRFLNGTANN…LILLQCNHKS (94 aa)) enclose the SRCR domain. N-linked (GlcNAc...) asparagine glycosylation is found at N697, N701, N721, N740, and N761. 6 disulfide bridges follow: C772/C782, C787/C911, C825/C841, C925/C992, C956/C971, and C982/C1010. Positions 800 to 1034 (IVGGNDSREG…FTEWIQSFLH (235 aa)) constitute a Peptidase S1 domain. N804 carries N-linked (GlcNAc...) asparagine glycosylation. H840 acts as the Charge relay system in catalysis. N-linked (GlcNAc...) asparagine glycosylation is present at N863. The Charge relay system role is filled by D891. N-linked (GlcNAc...) asparagine glycans are attached at residues N902 and N964. The active-site Charge relay system is S986.

The protein belongs to the peptidase S1 family. As to quaternary structure, heterotrimer of a catalytic (light) chain, a multidomain (heavy) chain, and a mini chain. The chains are derived from a single precursor that is cleaved by a trypsin-like protease. In terms of processing, the mini chain may be cleaved by elastase.

It is found in the membrane. The catalysed reaction is Activation of trypsinogen by selective cleavage of 6-Lys-|-Ile-7 bond.. Responsible for initiating activation of pancreatic proteolytic proenzymes (trypsin, chymotrypsin and carboxypeptidase A). It catalyzes the conversion of trypsinogen to trypsin which in turn activates other proenzymes including chymotrypsinogen, procarboxypeptidases, and proelastases. The polypeptide is Enteropeptidase (TMPRSS15) (Sus scrofa (Pig)).